A 500-amino-acid polypeptide reads, in one-letter code: Lysine--tRNA ligase (500 aa).

Residues Glu410 and Glu417 each contribute to the Mg(2+) site.

This sequence belongs to the class-II aminoacyl-tRNA synthetase family. Homodimer. Mg(2+) is required as a cofactor.

Its subcellular location is the cytoplasm. It catalyses the reaction tRNA(Lys) + L-lysine + ATP = L-lysyl-tRNA(Lys) + AMP + diphosphate. The sequence is that of Lysine--tRNA ligase from Pseudomonas fluorescens (strain ATCC BAA-477 / NRRL B-23932 / Pf-5).